Reading from the N-terminus, the 459-residue chain is Cysteine--tRNA ligase (459 aa).

Residue cysteine 28 coordinates Zn(2+). A 'HIGH' region motif is present at residues 30 to 40 (VTVYDLCHIGH). Positions 209, 234, and 238 each coordinate Zn(2+). Residues 266 to 270 (KMSKS) carry the 'KMSKS' region motif. Residue lysine 269 coordinates ATP.

The protein belongs to the class-I aminoacyl-tRNA synthetase family. Monomer. Requires Zn(2+) as cofactor.

It is found in the cytoplasm. It carries out the reaction tRNA(Cys) + L-cysteine + ATP = L-cysteinyl-tRNA(Cys) + AMP + diphosphate. The sequence is that of Cysteine--tRNA ligase from Histophilus somni (strain 2336) (Haemophilus somnus).